Consider the following 130-residue polypeptide: Glycine cleavage system H protein (130 aa).

The region spanning 24 to 106 (TATVGITDFA…YGDGWMFKVK (83 aa)) is the Lipoyl-binding domain. N6-lipoyllysine is present on lysine 65.

It belongs to the GcvH family. The glycine cleavage system is composed of four proteins: P, T, L and H. (R)-lipoate is required as a cofactor.

In terms of biological role, the glycine cleavage system catalyzes the degradation of glycine. The H protein shuttles the methylamine group of glycine from the P protein to the T protein. The chain is Glycine cleavage system H protein from Marinobacter nauticus (strain ATCC 700491 / DSM 11845 / VT8) (Marinobacter aquaeolei).